The sequence spans 92 residues: YcgL domain-containing protein HS_0805 (92 aa).

The YcgL domain maps to 1 to 85; sequence MLCAIYKTKR…QQENLLEQER (85 aa).

This is YcgL domain-containing protein HS_0805 from Histophilus somni (strain 129Pt) (Haemophilus somnus).